The chain runs to 54 residues: MPQLNPGPWFAILVFSWLIFLTIIPTKILSHISPNEPTPVSAEKHKTESWDWPW.

Residues L4 to I24 traverse the membrane as a helical segment. The segment at N35 to W54 is disordered. Positions A42–W54 are enriched in basic and acidic residues.

The protein belongs to the ATPase protein 8 family. As to quaternary structure, component of the ATP synthase complex composed at least of ATP5F1A/subunit alpha, ATP5F1B/subunit beta, ATP5MC1/subunit c (homooctomer), MT-ATP6/subunit a, MT-ATP8/subunit 8, ATP5ME/subunit e, ATP5MF/subunit f, ATP5MG/subunit g, ATP5MK/subunit k, ATP5MJ/subunit j, ATP5F1C/subunit gamma, ATP5F1D/subunit delta, ATP5F1E/subunit epsilon, ATP5PF/subunit F6, ATP5PB/subunit b, ATP5PD/subunit d, ATP5PO/subunit OSCP. ATP synthase complex consists of a soluble F(1) head domain (subunits alpha(3) and beta(3)) - the catalytic core - and a membrane F(0) domain - the membrane proton channel (subunits c, a, 8, e, f, g, k and j). These two domains are linked by a central stalk (subunits gamma, delta, and epsilon) rotating inside the F1 region and a stationary peripheral stalk (subunits F6, b, d, and OSCP).

It is found in the mitochondrion membrane. In terms of biological role, subunit 8, of the mitochondrial membrane ATP synthase complex (F(1)F(0) ATP synthase or Complex V) that produces ATP from ADP in the presence of a proton gradient across the membrane which is generated by electron transport complexes of the respiratory chain. ATP synthase complex consist of a soluble F(1) head domain - the catalytic core - and a membrane F(1) domain - the membrane proton channel. These two domains are linked by a central stalk rotating inside the F(1) region and a stationary peripheral stalk. During catalysis, ATP synthesis in the catalytic domain of F(1) is coupled via a rotary mechanism of the central stalk subunits to proton translocation. In vivo, can only synthesize ATP although its ATP hydrolase activity can be activated artificially in vitro. Part of the complex F(0) domain. This Cyprinus carpio (Common carp) protein is ATP synthase F(0) complex subunit 8.